The primary structure comprises 364 residues: Alanine racemase (364 aa).

Residue Lys35 is the Proton acceptor; specific for D-alanine of the active site. The residue at position 35 (Lys35) is an N6-(pyridoxal phosphate)lysine. Residue Arg131 coordinates substrate. Tyr256 acts as the Proton acceptor; specific for L-alanine in catalysis. A substrate-binding site is contributed by Met304.

Belongs to the alanine racemase family. Pyridoxal 5'-phosphate is required as a cofactor.

It catalyses the reaction L-alanine = D-alanine. Its pathway is amino-acid biosynthesis; D-alanine biosynthesis; D-alanine from L-alanine: step 1/1. Its function is as follows. Catalyzes the interconversion of L-alanine and D-alanine. May also act on other amino acids. The sequence is that of Alanine racemase (alr) from Halorhodospira halophila (strain DSM 244 / SL1) (Ectothiorhodospira halophila (strain DSM 244 / SL1)).